An 802-amino-acid chain; its full sequence is Aldehyde dehydrogenase family 16 member A1 (802 aa).

A disordered region spans residues 513-554 (SLPSGPETGPSPAPPYGLFVRGRFQSPGTQSSRPIKDSSGKV).

Belongs to the aldehyde dehydrogenase family. In terms of assembly, interacts with SPG21.

This chain is Aldehyde dehydrogenase family 16 member A1 (Aldh16a1), found in Rattus norvegicus (Rat).